The primary structure comprises 145 residues: D-aminoacyl-tRNA deacylase (145 aa).

Residues 137–138 (GP) carry the Gly-cisPro motif, important for rejection of L-amino acids motif.

The protein belongs to the DTD family. As to quaternary structure, homodimer.

It is found in the cytoplasm. The enzyme catalyses glycyl-tRNA(Ala) + H2O = tRNA(Ala) + glycine + H(+). The catalysed reaction is a D-aminoacyl-tRNA + H2O = a tRNA + a D-alpha-amino acid + H(+). Its function is as follows. An aminoacyl-tRNA editing enzyme that deacylates mischarged D-aminoacyl-tRNAs. Also deacylates mischarged glycyl-tRNA(Ala), protecting cells against glycine mischarging by AlaRS. Acts via tRNA-based rather than protein-based catalysis; rejects L-amino acids rather than detecting D-amino acids in the active site. By recycling D-aminoacyl-tRNA to D-amino acids and free tRNA molecules, this enzyme counteracts the toxicity associated with the formation of D-aminoacyl-tRNA entities in vivo and helps enforce protein L-homochirality. This Klebsiella pneumoniae subsp. pneumoniae (strain ATCC 700721 / MGH 78578) protein is D-aminoacyl-tRNA deacylase.